Reading from the N-terminus, the 113-residue chain is Nucleoid-associated protein CLH_3225 (113 aa).

Residues 1-14 (MAKGGFPGGFGGGN) are compositionally biased toward gly residues. The disordered stretch occupies residues 1-31 (MAKGGFPGGFGGGNMNNLMKQAQKLQKQMED).

It belongs to the YbaB/EbfC family. As to quaternary structure, homodimer.

Its subcellular location is the cytoplasm. The protein localises to the nucleoid. Functionally, binds to DNA and alters its conformation. May be involved in regulation of gene expression, nucleoid organization and DNA protection. This chain is Nucleoid-associated protein CLH_3225, found in Clostridium botulinum (strain Alaska E43 / Type E3).